We begin with the raw amino-acid sequence, 122 residues long: Large ribosomal subunit protein uL14 (122 aa).

Belongs to the universal ribosomal protein uL14 family. As to quaternary structure, part of the 50S ribosomal subunit. Forms a cluster with proteins L3 and L19. In the 70S ribosome, L14 and L19 interact and together make contacts with the 16S rRNA in bridges B5 and B8.

Its function is as follows. Binds to 23S rRNA. Forms part of two intersubunit bridges in the 70S ribosome. This Chlorobium phaeobacteroides (strain BS1) protein is Large ribosomal subunit protein uL14.